The chain runs to 210 residues: Large ribosomal subunit protein uL3 (210 aa).

A disordered region spans residues 119–151 (FQGAIKRHGQSRGPMSHGSRYHRRPGSMGPVAP).

This sequence belongs to the universal ribosomal protein uL3 family. Part of the 50S ribosomal subunit. Forms a cluster with proteins L14 and L19.

In terms of biological role, one of the primary rRNA binding proteins, it binds directly near the 3'-end of the 23S rRNA, where it nucleates assembly of the 50S subunit. The chain is Large ribosomal subunit protein uL3 from Bacillus cytotoxicus (strain DSM 22905 / CIP 110041 / 391-98 / NVH 391-98).